The following is a 95-amino-acid chain: Aspartyl/glutamyl-tRNA(Asn/Gln) amidotransferase subunit C (95 aa).

The protein belongs to the GatC family. As to quaternary structure, heterotrimer of A, B and C subunits.

The enzyme catalyses L-glutamyl-tRNA(Gln) + L-glutamine + ATP + H2O = L-glutaminyl-tRNA(Gln) + L-glutamate + ADP + phosphate + H(+). The catalysed reaction is L-aspartyl-tRNA(Asn) + L-glutamine + ATP + H2O = L-asparaginyl-tRNA(Asn) + L-glutamate + ADP + phosphate + 2 H(+). Its function is as follows. Allows the formation of correctly charged Asn-tRNA(Asn) or Gln-tRNA(Gln) through the transamidation of misacylated Asp-tRNA(Asn) or Glu-tRNA(Gln) in organisms which lack either or both of asparaginyl-tRNA or glutaminyl-tRNA synthetases. The reaction takes place in the presence of glutamine and ATP through an activated phospho-Asp-tRNA(Asn) or phospho-Glu-tRNA(Gln). The polypeptide is Aspartyl/glutamyl-tRNA(Asn/Gln) amidotransferase subunit C (Laribacter hongkongensis (strain HLHK9)).